The following is a 298-amino-acid chain: 4-diphosphocytidyl-2-C-methyl-D-erythritol kinase (298 aa).

K15 is an active-site residue. Residue 100-110 (PIAAGIGGGSA) coordinates ATP. The active site involves D142.

The protein belongs to the GHMP kinase family. IspE subfamily.

The enzyme catalyses 4-CDP-2-C-methyl-D-erythritol + ATP = 4-CDP-2-C-methyl-D-erythritol 2-phosphate + ADP + H(+). It functions in the pathway isoprenoid biosynthesis; isopentenyl diphosphate biosynthesis via DXP pathway; isopentenyl diphosphate from 1-deoxy-D-xylulose 5-phosphate: step 3/6. Functionally, catalyzes the phosphorylation of the position 2 hydroxy group of 4-diphosphocytidyl-2C-methyl-D-erythritol. This chain is 4-diphosphocytidyl-2-C-methyl-D-erythritol kinase, found in Rhodopseudomonas palustris (strain BisA53).